The sequence spans 346 residues: Extracellular protease (346 aa).

A signal peptide spans 1 to 21 (MMKATPIALLLAGVLASPLCA). Residue histidine 296 coordinates Zn(2+). The active site involves glutamate 297. Residues histidine 300 and aspartate 309 each contribute to the Zn(2+) site.

Belongs to the peptidase M35 family. Zn(2+) serves as cofactor.

Its function is as follows. Heat-labile protease. In Aeromonas hydrophila, this protein is Extracellular protease.